Here is a 633-residue protein sequence, read N- to C-terminus: Electron transfer flavoprotein-ubiquinone oxidoreductase, mitochondrial (633 aa).

The N-terminal 90 residues, 1 to 90, are a transit peptide targeting the mitochondrion; it reads MHRFLVKLSS…NGITSSRCIS (90 aa). 102–116 lines the FAD pocket; the sequence is VLIVGAGPAGLSAAI. The stretch at 140 to 161 is an intramembrane region; it reads VGGHIISGNVFEPLALDELLPH. 2 residues coordinate a ubiquinone: Gly334 and Gly335. An intramembrane segment occupies 401-421; that stretch reads IPYPVFPGGAIIGCSAGFLNV. [4Fe-4S] cluster-binding residues include Cys578, Cys602, Cys605, and Cys608. In terms of domain architecture, 4Fe-4S ferredoxin-type spans 593 to 622; it reads PKLQINAQNCLHCKACDIKDPKQNIEWTVP.

The protein belongs to the ETF-QO/FixC family. [4Fe-4S] cluster is required as a cofactor. FAD serves as cofactor.

The protein resides in the mitochondrion inner membrane. It carries out the reaction a ubiquinone + reduced [electron-transfer flavoprotein] = a ubiquinol + oxidized [electron-transfer flavoprotein] + H(+). With respect to regulation, up-regulated by KIN10, by S1-bZIP specific dimers, and also by C/S1 bZIP heterodimers. Its function is as follows. Accepts electrons from ETF and reduces ubiquinone. May act downstream of IVD and D2HGDH in the degradation of phytol or chlorophyll during dark-induced senescence and sugar starvation. The sequence is that of Electron transfer flavoprotein-ubiquinone oxidoreductase, mitochondrial (ETFQO) from Arabidopsis thaliana (Mouse-ear cress).